A 158-amino-acid polypeptide reads, in one-letter code: Protein hunchback (158 aa).

Positions 18–34 (HNHHHHHHHGHHQHQQR) are enriched in basic residues. Disordered regions lie at residues 18–96 (HNHH…TTTA) and 118–158 (LTPP…KYMA). The segment covering 41-50 (ASSPHQSPLP) has biased composition (polar residues). Positions 52–65 (LQLEQYLKQQQQQP) are enriched in low complexity. Over residues 139–158 (EPEKEHDLMSNSSEDMKYMA) the composition is skewed to basic and acidic residues.

Belongs to the hunchback C2H2-type zinc-finger protein family.

It localises to the nucleus. Gap class segmentation protein that controls development of head structures. This chain is Protein hunchback (hb), found in Drosophila mimica (Fruit fly).